Consider the following 313-residue polypeptide: Acetyl-coenzyme A carboxylase carboxyl transferase subunit alpha (313 aa).

Positions 34–288 (KLKDQRDIAL…KNVVLEAVNE (255 aa)) constitute a CoA carboxyltransferase C-terminal domain.

The protein belongs to the AccA family. In terms of assembly, acetyl-CoA carboxylase is a heterohexamer composed of biotin carboxyl carrier protein (AccB), biotin carboxylase (AccC) and two subunits each of ACCase subunit alpha (AccA) and ACCase subunit beta (AccD).

It is found in the cytoplasm. It catalyses the reaction N(6)-carboxybiotinyl-L-lysyl-[protein] + acetyl-CoA = N(6)-biotinyl-L-lysyl-[protein] + malonyl-CoA. It functions in the pathway lipid metabolism; malonyl-CoA biosynthesis; malonyl-CoA from acetyl-CoA: step 1/1. In terms of biological role, component of the acetyl coenzyme A carboxylase (ACC) complex. First, biotin carboxylase catalyzes the carboxylation of biotin on its carrier protein (BCCP) and then the CO(2) group is transferred by the carboxyltransferase to acetyl-CoA to form malonyl-CoA. This Fusobacterium nucleatum subsp. nucleatum (strain ATCC 25586 / DSM 15643 / BCRC 10681 / CIP 101130 / JCM 8532 / KCTC 2640 / LMG 13131 / VPI 4355) protein is Acetyl-coenzyme A carboxylase carboxyl transferase subunit alpha.